We begin with the raw amino-acid sequence, 344 residues long: GTPase Obg (344 aa).

In terms of domain architecture, Obg spans 1-159 (MKFLDQAKVY…RWIWLRLKLI (159 aa)). The OBG-type G domain maps to 160 to 327 (ADAGLVGLPN…ALRLLLSVVE (168 aa)). Residues 166 to 173 (GLPNAGKS), 191 to 195 (FTTLH), 212 to 215 (DIPG), 279 to 282 (SKVD), and 308 to 310 (SAQ) each bind GTP. The Mg(2+) site is built by Ser173 and Thr193.

Belongs to the TRAFAC class OBG-HflX-like GTPase superfamily. OBG GTPase family. In terms of assembly, monomer. Requires Mg(2+) as cofactor.

It localises to the cytoplasm. Its function is as follows. An essential GTPase which binds GTP, GDP and possibly (p)ppGpp with moderate affinity, with high nucleotide exchange rates and a fairly low GTP hydrolysis rate. Plays a role in control of the cell cycle, stress response, ribosome biogenesis and in those bacteria that undergo differentiation, in morphogenesis control. The protein is GTPase Obg of Xanthobacter autotrophicus (strain ATCC BAA-1158 / Py2).